The primary structure comprises 415 residues: uncharacterized protein (415 aa).

Positions 276 and 316 each coordinate [4Fe-4S] cluster.

Homodimer. It depends on [4Fe-4S] cluster as a cofactor.

This is an uncharacterized protein from Methanocaldococcus jannaschii (strain ATCC 43067 / DSM 2661 / JAL-1 / JCM 10045 / NBRC 100440) (Methanococcus jannaschii).